The chain runs to 732 residues: Kell blood group glycoprotein (732 aa).

Positions 1-37 (MEGGDQSEEEPRERSQAGGMGTLWSQESTPEERLPVE) are disordered. Topologically, residues 1-47 (MEGGDQSEEEPRERSQAGGMGTLWSQESTPEERLPVEGSRPWAVARR) are cytoplasmic. A Phosphoserine modification is found at serine 7. The chain crosses the membrane as a helical; Signal-anchor for type II membrane protein span at residues 48 to 67 (VLTAILILGLLLCFSVLLFY). The Extracellular portion of the chain corresponds to 68–732 (NFQNCGPRPC…LNPSSRCQLW (665 aa)). The region spanning 76–732 (PCETSVCLDL…LNPSSRCQLW (657 aa)) is the Peptidase M13 domain. Cysteine 77 and cysteine 82 are oxidised to a cystine. N-linked (GlcNAc...) asparagine glycans are attached at residues asparagine 94 and asparagine 115. 4 cysteine pairs are disulfide-bonded: cysteine 100-cysteine 717, cysteine 108-cysteine 682, cysteine 155-cysteine 410, and cysteine 610-cysteine 729. A glycan (N-linked (GlcNAc...) asparagine; in KEL2 antigen) is linked at asparagine 191. A glycan (N-linked (GlcNAc...) asparagine) is linked at asparagine 345. Histidine 581 contributes to the Zn(2+) binding site. Glutamate 582 is a catalytic residue. Histidine 585 contacts Zn(2+). Asparagine 627 is a glycosylation site (N-linked (GlcNAc...) asparagine). Glutamate 634 contacts Zn(2+). Residue aspartate 638 is the Proton donor of the active site. A disordered region spans residues 684–703 (KPSPQDSHDTHSPPHLRVHG).

The protein belongs to the peptidase M13 family. As to quaternary structure, heterodimer with XK; disulfide-linked. The cofactor is Zn(2+). In terms of processing, N-glycosylated. In terms of tissue distribution, expressed at high levels in erythrocytes and testis (in Sertoli cells), and, at lower levels, in skeletal muscle, tonsils (in follicular dendritic cells), lymph node, spleen and appendix (at protein level). Also expressed in many adult and fetal nonerythroid tissues, including brain, spleen, lymph nodes and bone marrow.

It is found in the cell membrane. Its function is as follows. Zinc endopeptidase with endothelin-3-converting enzyme activity. Cleaves EDN1, EDN2 and EDN3, with a marked preference for EDN3. The polypeptide is Kell blood group glycoprotein (KEL) (Homo sapiens (Human)).